We begin with the raw amino-acid sequence, 240 residues long: Transcriptional regulatory protein ResD (240 aa).

The Response regulatory domain occupies 8–121; the sequence is KILVVDDEAR…EVVLRVKALL (114 aa). 4-aspartylphosphate is present on aspartate 57. The ompR/PhoB-type DNA-binding region spans 137–237; the sequence is KNVLVFSHLS…VWGVGYKFEV (101 aa).

As to quaternary structure, interacts with the RNA polymerase core. Phosphorylated by ResE.

It localises to the cytoplasm. In terms of biological role, member of the two-component regulatory system ResD/ResE. Required for the expression of resA, ctaA, qcrABC and fnr; activation role in global regulation of aerobic and anaerobic respiration. The protein is Transcriptional regulatory protein ResD (resD) of Bacillus subtilis (strain 168).